We begin with the raw amino-acid sequence, 877 residues long: AP-5 complex subunit beta-1 (877 aa).

In terms of assembly, probably part of the adaptor protein complex 5 (AP-5), a tetramer composed of AP5B1, AP5M1, AP5S1 and AP5Z1. Interacts with ZFYVE26 and SPG11.

Its function is as follows. As part of AP-5, a probable fifth adaptor protein complex, it may be involved in endosomal transport. This is AP-5 complex subunit beta-1 (AP5B1) from Bos taurus (Bovine).